The sequence spans 1723 residues: Lys-gingipain (1723 aa).

Positions 1 to 24 are cleaved as a signal peptide; sequence MRKLLLLIAASLLGVGLYAQSAKI. Positions 25–228 are excised as a propeptide; that stretch reads KLDAPTTRTT…ETAYKQLFNR (204 aa). 5 residues coordinate Ca(2+): Asp313, Asp337, Asp339, Phe341, and Glu343. The Proton donor role is filled by His444. The Nucleophile role is filled by Cys477. Positions 482 and 491 each coordinate Ca(2+). Positions 964–985 are disordered; the sequence is WDAPNGTPNPNPNPNPGTTTLS. Ca(2+) contacts are provided by Ser987, Glu989, Asp1000, Asp1002, Asp1004, His1006, Ser1021, Gly1023, Asn1042, Asp1145, Glu1146, Asp1430, Glu1432, Asp1444, Asp1446, Asp1448, Asn1450, Ser1480, Asn1495, and Asp1585.

Belongs to the peptidase C25 family. Post-translationally, proteolytically cleaved into a catalytic subunit and three adhesins. Arg-gingipain is involved in this post-translational processing.

Its subcellular location is the secreted. The catalysed reaction is Endopeptidase with strict specificity for lysyl bonds.. Activated by the thiol-reducing agents cysteine, 2-mercaptoethanol and dithiothreitol. Inhibited by iodacetamide, iodoacetic acid, leupeptin, tosyl-L-lysine and tosyl-L-phenylalanine. Not inhibited by elastatinal, chymostatin, cystatins, alpha1-antichymotrypsin or the serine protease inhibitors phenylmethylsulfonyl fluoride and diisopropylfluorophosphate. Not inhibited by metal ion chelators. Inhibited by the heavy metal ions Fe(3+), Zn(2+), Cu(2+) and Mn(2+). Cysteine proteinase with a strong preference for substrates with Lys in the P1 position. Hydrolyzes bovine hemoglobin, bovine serum albumin, casein, human placental type I collagen and human IgA and IgG. Disrupts the functions of polymorphonuclear leukocytes. May act as a virulence factor in the development of peridontal disease. Involved in the coaggregation of P.gingivalis with other oral bacteria. The polypeptide is Lys-gingipain (Porphyromonas gingivalis (strain ATCC 33277 / DSM 20709 / CIP 103683 / JCM 12257 / NCTC 11834 / 2561)).